The primary structure comprises 346 residues: STE20-related kinase adapter protein stlk (346 aa).

A Protein kinase domain is found at 10–298 (YKLLEILKNG…ASKLMTHSFL (289 aa)). ATP contacts are provided by residues 16–24 (LKNGMIGTV) and Lys-38.

This sequence belongs to the protein kinase superfamily. STE Ser/Thr protein kinase family. STE20 subfamily.

The sequence is that of STE20-related kinase adapter protein stlk from Drosophila melanogaster (Fruit fly).